We begin with the raw amino-acid sequence, 193 residues long: Large ribosomal subunit protein eL19B (193 aa).

The segment at 157–179 is disordered; sequence EQQDARRARAKAARQRRAKAVEE. Over residues 164–174 the composition is skewed to basic residues; that stretch reads ARAKAARQRRA.

Belongs to the eukaryotic ribosomal protein eL19 family. As to quaternary structure, component of the large ribosomal subunit (LSU). Mature yeast ribosomes consist of a small (40S) and a large (60S) subunit. The 40S small subunit contains 1 molecule of ribosomal RNA (18S rRNA) and at least 33 different proteins. The large 60S subunit contains 3 rRNA molecules (25S, 5.8S and 5S rRNA) and at least 46 different proteins. eL19 lies in close proximity to the binding site for eukaryotic initiation factor eIF4G.

It localises to the cytoplasm. Functionally, component of the ribosome, a large ribonucleoprotein complex responsible for the synthesis of proteins in the cell. The small ribosomal subunit (SSU) binds messenger RNAs (mRNAs) and translates the encoded message by selecting cognate aminoacyl-transfer RNA (tRNA) molecules. The large subunit (LSU) contains the ribosomal catalytic site termed the peptidyl transferase center (PTC), which catalyzes the formation of peptide bonds, thereby polymerizing the amino acids delivered by tRNAs into a polypeptide chain. The nascent polypeptides leave the ribosome through a tunnel in the LSU and interact with protein factors that function in enzymatic processing, targeting, and the membrane insertion of nascent chains at the exit of the ribosomal tunnel. eL19 may play a role in the last stages of translation initiation, in particular subunit joining and shedding/releasing factors. The polypeptide is Large ribosomal subunit protein eL19B (rpl1902) (Schizosaccharomyces pombe (strain 972 / ATCC 24843) (Fission yeast)).